A 231-amino-acid polypeptide reads, in one-letter code: Uracil-DNA glycosylase (231 aa).

Asp-70 serves as the catalytic Proton acceptor.

This sequence belongs to the uracil-DNA glycosylase (UDG) superfamily. UNG family.

It is found in the cytoplasm. It catalyses the reaction Hydrolyzes single-stranded DNA or mismatched double-stranded DNA and polynucleotides, releasing free uracil.. Functionally, excises uracil residues from the DNA which can arise as a result of misincorporation of dUMP residues by DNA polymerase or due to deamination of cytosine. The sequence is that of Uracil-DNA glycosylase from Campylobacter curvus (strain 525.92).